The chain runs to 208 residues: Small ribosomal subunit protein uS4 (208 aa).

An S4 RNA-binding domain is found at 95-157; that stretch reads RRIDNVVYRA…DSLKKLVRSN (63 aa).

The protein belongs to the universal ribosomal protein uS4 family. As to quaternary structure, part of the 30S ribosomal subunit. Contacts protein S5. The interaction surface between S4 and S5 is involved in control of translational fidelity.

Functionally, one of the primary rRNA binding proteins, it binds directly to 16S rRNA where it nucleates assembly of the body of the 30S subunit. In terms of biological role, with S5 and S12 plays an important role in translational accuracy. The chain is Small ribosomal subunit protein uS4 from Borrelia hermsii (strain HS1 / DAH).